We begin with the raw amino-acid sequence, 190 residues long: Holliday junction branch migration complex subunit RuvA (190 aa).

Positions 1 to 64 (MIGRITGTLI…EDAQLLYGFG (64 aa)) are domain I. Residues 65 to 137 (SSAERSTFRE…MRGKLGADIG (73 aa)) form a domain II region. The interval 137–141 (GATPH) is flexible linker. The tract at residues 142–190 (AAGGHQSDILNALLALGYSDKESQAALKKLPEGVDVSEGIRLALKALVR) is domain III.

The protein belongs to the RuvA family. As to quaternary structure, homotetramer. Forms an RuvA(8)-RuvB(12)-Holliday junction (HJ) complex. HJ DNA is sandwiched between 2 RuvA tetramers; dsDNA enters through RuvA and exits via RuvB. An RuvB hexamer assembles on each DNA strand where it exits the tetramer. Each RuvB hexamer is contacted by two RuvA subunits (via domain III) on 2 adjacent RuvB subunits; this complex drives branch migration. In the full resolvosome a probable DNA-RuvA(4)-RuvB(12)-RuvC(2) complex forms which resolves the HJ.

It localises to the cytoplasm. Functionally, the RuvA-RuvB-RuvC complex processes Holliday junction (HJ) DNA during genetic recombination and DNA repair, while the RuvA-RuvB complex plays an important role in the rescue of blocked DNA replication forks via replication fork reversal (RFR). RuvA specifically binds to HJ cruciform DNA, conferring on it an open structure. The RuvB hexamer acts as an ATP-dependent pump, pulling dsDNA into and through the RuvAB complex. HJ branch migration allows RuvC to scan DNA until it finds its consensus sequence, where it cleaves and resolves the cruciform DNA. The polypeptide is Holliday junction branch migration complex subunit RuvA (Bordetella parapertussis (strain 12822 / ATCC BAA-587 / NCTC 13253)).